The chain runs to 453 residues: Chromosomal replication initiator protein DnaA (453 aa).

Residues 1–75 are domain I, interacts with DnaA modulators; that stretch reads MSENMEELWS…SLKKISGKQL (75 aa). A domain II region spans residues 75 to 114; it reads LKIKFLLPGEKIKMEEQNNENEEKPESTSKKSSQGSEHTT. A compositionally biased stretch (basic and acidic residues) spans 87 to 103; it reads KMEEQNNENEEKPESTS. The tract at residues 87-112 is disordered; it reads KMEEQNNENEEKPESTSKKSSQGSEH. Residues 115-331 form a domain III, AAA+ region region; the sequence is WLNPKYTFDT…GGLIRVIAYS (217 aa). The ATP site is built by G159, G161, K162, and T163. A domain IV, binds dsDNA region spans residues 332–453; sequence SMANKKITKE…DEIKNLLHGD (122 aa).

The protein belongs to the DnaA family. Oligomerizes as a right-handed, spiral filament on DNA at oriC.

The protein resides in the cytoplasm. In terms of biological role, plays an essential role in the initiation and regulation of chromosomal replication. ATP-DnaA binds to the origin of replication (oriC) to initiate formation of the DNA replication initiation complex once per cell cycle. Binds the DnaA box (a 9 base pair repeat at the origin) and separates the double-stranded (ds)DNA. Forms a right-handed helical filament on oriC DNA; dsDNA binds to the exterior of the filament while single-stranded (ss)DNA is stabiized in the filament's interior. The ATP-DnaA-oriC complex binds and stabilizes one strand of the AT-rich DNA unwinding element (DUE), permitting loading of DNA polymerase. After initiation quickly degrades to an ADP-DnaA complex that is not apt for DNA replication. Binds acidic phospholipids. The protein is Chromosomal replication initiator protein DnaA of Natranaerobius thermophilus (strain ATCC BAA-1301 / DSM 18059 / JW/NM-WN-LF).